The primary structure comprises 281 residues: NADPH-dependent 7-cyano-7-deazaguanine reductase (281 aa).

Position 87 to 89 (87 to 89) interacts with substrate; the sequence is IES. 89 to 90 is a binding site for NADPH; the sequence is SK. Cys-188 functions as the Thioimide intermediate in the catalytic mechanism. The active-site Proton donor is the Asp-195. Residue 227–228 participates in substrate binding; it reads HE. 256–257 is an NADPH binding site; the sequence is RG.

Belongs to the GTP cyclohydrolase I family. QueF type 2 subfamily. As to quaternary structure, homodimer.

It is found in the cytoplasm. It catalyses the reaction 7-aminomethyl-7-carbaguanine + 2 NADP(+) = 7-cyano-7-deazaguanine + 2 NADPH + 3 H(+). It participates in tRNA modification; tRNA-queuosine biosynthesis. Its function is as follows. Catalyzes the NADPH-dependent reduction of 7-cyano-7-deazaguanine (preQ0) to 7-aminomethyl-7-deazaguanine (preQ1). In Photobacterium profundum (strain SS9), this protein is NADPH-dependent 7-cyano-7-deazaguanine reductase.